The chain runs to 249 residues: Methyl-coenzyme M reductase I subunit gamma (249 aa).

Arg-120 contributes to the coenzyme M binding site.

The protein belongs to the methyl-coenzyme M reductase gamma subunit family. MCR is a hexamer of two alpha, two beta, and two gamma chains, forming a dimer of heterotrimers. It depends on coenzyme F430 as a cofactor.

The protein localises to the cytoplasm. The catalysed reaction is coenzyme B + methyl-coenzyme M = methane + coenzyme M-coenzyme B heterodisulfide. It functions in the pathway one-carbon metabolism; methyl-coenzyme M reduction; methane from methyl-coenzyme M: step 1/1. With respect to regulation, methyl-coenzyme M reductase activity is inhibited by 3-nitrooxypropanol (3-NOP) in vitro and in vivo, by oxidation of its active site Ni(I), which stops both growth and methanogenesis. Is also inhibited by the reaction product CoM-S-S-CoB. Its function is as follows. Component of the methyl-coenzyme M reductase (MCR) I that catalyzes the reductive cleavage of methyl-coenzyme M (CoM-S-CH3 or 2-(methylthio)ethanesulfonate) using coenzyme B (CoB or 7-mercaptoheptanoylthreonine phosphate) as reductant which results in the production of methane and the mixed heterodisulfide of CoB and CoM (CoM-S-S-CoB). This is the final step in methanogenesis. Neither N-6-mercaptohexanoylthreonine phosphate (H-S-HxoTP) nor N-8-mercaptooctanoylthreonine phosphate (H-SOcoTP) nor any other thiol compound such as CoA or CoM can substitute for CoB as the electron donor. The polypeptide is Methyl-coenzyme M reductase I subunit gamma (mcrG) (Methanothermobacter marburgensis (strain ATCC BAA-927 / DSM 2133 / JCM 14651 / NBRC 100331 / OCM 82 / Marburg) (Methanobacterium thermoautotrophicum)).